The chain runs to 181 residues: MCKGLAALPHSCLERAKEIKIKLGILLQKPESAIDLVIPYNEKPEKPAKTQKPSLDEALQWRDSLDKLLQNNYGLASFKSFLKSEFSEENLEFWMACEDYKKIKSPVKMAETAKKIYEEFIQVEAPKEVNIDHFTKEITVKNLVEPSPSSFDVAQKRIHALMEKDSLPRFVRSEFYQEFIK.

Residues 64-180 (SLDKLLQNNY…VRSEFYQEFI (117 aa)) enclose the RGS domain.

The protein resides in the cytoplasm. It localises to the membrane. Its function is as follows. Inhibits signal transduction by increasing the GTPase activity of G protein alpha subunits thereby driving them into their inactive GDP-bound form. Binds to G(i)-alpha and G(o)-alpha, but not to G(s)-alpha. The chain is Regulator of G-protein signaling 5 (RGS5) from Bos taurus (Bovine).